We begin with the raw amino-acid sequence, 53 residues long: Ovomucoid (53 aa).

Positions 3–53 (VDCSEYPQPTCTTEHRPVCGSNNETYGNKCNFCNAVVKSNGTLTVSHFGKC) constitute a Kazal-like domain. Disulfide bonds link Cys5–Cys35, Cys13–Cys32, and Cys21–Cys53. The N-linked (GlcNAc...) asparagine glycan is linked to Asn42.

The protein localises to the secreted. This is Ovomucoid from Polyplectron bicalcaratum (Grey peacock-pheasant).